Here is a 204-residue protein sequence, read N- to C-terminus: MAAAGWRDGSGQEKYRLVVVGGGGVGKSALTIQFIQSYFVTDYDPTIEDSYTKQCVIDDRAARLDILDTAGQEEFGAMREQYMRTGEGFLLVFSVTDRGSFEEIYKFQRQILRVKDRDEFPMILIGNKADLDHQRQVTQEEGQQLARQLKVTYMEASAKIRMNVDQAFHELVRVIRKFQEQECPPSPEPTRKEKDKKGCHCVIF.

At Ala-2 the chain carries N-acetylalanine. Position 21 to 29 (21 to 29 (GGGGVGKSA)) interacts with GTP. The short motif at 43–51 (YDPTIEDSY) is the Effector region element. Residues 68-72 (DTAGQ), 127-130 (NKAD), and 157-159 (SAK) each bind GTP. Ser-186 bears the Phosphoserine mark. Residues Lys-192, Lys-194, Lys-196, and Lys-197 are each lipidated (N6-palmitoyl lysine). Residue Cys-199 is the site of S-palmitoyl cysteine attachment. Cys-201 is subject to Cysteine methyl ester. Residue Cys-201 is the site of S-farnesyl cysteine attachment. The propeptide at 202–204 (VIF) is removed in mature form.

Belongs to the small GTPase superfamily. Ras family. Interacts with RASSF5. In terms of processing, may be post-translationally modified by both palmitoylation and polyisoprenylation. Fatty-acylation at Lys-192, Lys-194; lys-196 and Lys-197 is required for localization to the plasma membrane and activity. Defatty-acylated by SIRT6, affecting its localization to the plasma membrane. Ubiquitously present in all tissues examined, with the highest levels in heart, placenta, and skeletal muscle. Moderate levels in lung and liver; low levels in brain, kidney, and pancreas.

The protein resides in the cell membrane. It is found in the golgi apparatus membrane. It carries out the reaction GTP + H2O = GDP + phosphate + H(+). Functionally, GTP-binding protein with GTPase activity, involved in the regulation of MAPK signaling pathway and thereby controlling multiple cellular processes. Regulates craniofacial development. The polypeptide is Ras-related protein R-Ras2 (Homo sapiens (Human)).